The primary structure comprises 139 residues: Glutamate mutase sigma subunit (139 aa).

In terms of domain architecture, B12-binding spans 4-139 (KIKLVLGVIG…DLHADFPDHA (136 aa)). Adenosylcob(III)alamin is bound by residues 14–18 (SDCHA), H17, 62–64 (SSL), and 94–98 (NIVVG).

Belongs to the methylaspartate mutase GlmS subunit family. In terms of assembly, heterotetramer composed of 2 epsilon subunits (GlmE) and 2 sigma subunits (GlmS). GlmE exists as a homodimer and GlmS as a monomer. The cofactor is adenosylcob(III)alamin.

It catalyses the reaction (2S,3S)-3-methyl-L-aspartate = L-glutamate. It participates in amino-acid degradation; L-glutamate degradation via mesaconate pathway; acetate and pyruvate from L-glutamate: step 1/4. Functionally, catalyzes the carbon skeleton rearrangement of L-glutamate to L-threo-3-methylaspartate ((2S,3S)-3-methylaspartate). The protein is Glutamate mutase sigma subunit of Treponema denticola (strain ATCC 35405 / DSM 14222 / CIP 103919 / JCM 8153 / KCTC 15104).